The primary structure comprises 226 residues: tRNA (guanine-N(1)-)-methyltransferase (226 aa).

S-adenosyl-L-methionine-binding positions include G112 and 132–137 (IGDYVL).

It belongs to the RNA methyltransferase TrmD family. In terms of assembly, homodimer.

It is found in the cytoplasm. It catalyses the reaction guanosine(37) in tRNA + S-adenosyl-L-methionine = N(1)-methylguanosine(37) in tRNA + S-adenosyl-L-homocysteine + H(+). Specifically methylates guanosine-37 in various tRNAs. In Flavobacterium johnsoniae (strain ATCC 17061 / DSM 2064 / JCM 8514 / BCRC 14874 / CCUG 350202 / NBRC 14942 / NCIMB 11054 / UW101) (Cytophaga johnsonae), this protein is tRNA (guanine-N(1)-)-methyltransferase.